The following is a 292-amino-acid chain: MEMO1 family protein PF1638 (292 aa).

This sequence belongs to the MEMO1 family.

The polypeptide is MEMO1 family protein PF1638 (Pyrococcus furiosus (strain ATCC 43587 / DSM 3638 / JCM 8422 / Vc1)).